We begin with the raw amino-acid sequence, 304 residues long: ATP synthase gamma chain (304 aa).

This sequence belongs to the ATPase gamma chain family. In terms of assembly, F-type ATPases have 2 components, CF(1) - the catalytic core - and CF(0) - the membrane proton channel. CF(1) has five subunits: alpha(3), beta(3), gamma(1), delta(1), epsilon(1). CF(0) has three main subunits: a, b and c.

Its subcellular location is the cell membrane. Functionally, produces ATP from ADP in the presence of a proton gradient across the membrane. The gamma chain is believed to be important in regulating ATPase activity and the flow of protons through the CF(0) complex. The sequence is that of ATP synthase gamma chain from Mycolicibacterium paratuberculosis (strain ATCC BAA-968 / K-10) (Mycobacterium paratuberculosis).